The following is a 2473-amino-acid chain: Reducing polyketide synthase grgA (2473 aa).

In terms of domain architecture, Ketosynthase family 3 (KS3) spans R15 to S446. Catalysis depends on for beta-ketoacyl synthase activity residues C188, H327, and H366. One can recognise a Malonyl-CoA:ACP transacylase (MAT) domain in the interval I559–A882. Positions H956–P1099 are N-terminal hotdog fold. The interval H956–R1260 is dehydratase (DH) domain. Positions H956–P1262 constitute a PKS/mFAS DH domain. H990 (proton acceptor; for dehydratase activity) is an active-site residue. A C-terminal hotdog fold region spans residues M1114–P1262. The active-site Proton donor; for dehydratase activity is D1172. The methyltransfrase (MT) domain stretch occupies residues T1300–Q1606. The 174-residue stretch at T2108 to L2281 folds into the Ketoreductase (KR) domain. Residues A2388 to S2473 form the Carrier domain. S2426 carries the O-(pantetheine 4'-phosphoryl)serine modification.

Pantetheine 4'-phosphate serves as cofactor.

It participates in secondary metabolite biosynthesis. Its function is as follows. Reducing polyketide synthase; part of the gene cluster that mediates the biosynthesis of gregatin A, a fungal polyketide featuring an alkylated furanone core. The PKS grgA synthesizes C11 and C4 polyketide chains in the presence and absence of the trans-enoyl reductase grgB, respectively. The polyketide transferase grgF is then responsible for the fusion of the two carbon chains to produce the furanone skeleton of gregatin A. Next, the cytochrome P450 monooxygenase grgG accepts performs the oxidative cyclization to furnish the gregatin scaffold and leads to the formation of desmethylgregatin A. Finally, the O-methyltransferase grgD methylates the carboxyl group of desmethylgregatin A to provide gregatin A. This Penicillium sp protein is Reducing polyketide synthase grgA.